Consider the following 595-residue polypeptide: MDGEGEGSGIRLSKRFAGGKVTGGSLEVDYKTKSGTAWSHSFLNQKPWHPLSYPNQRRKWIAEQTHAQHDRRAEEVAREFAQEQEFFKQAALISKKEREKIETMKAVSFMYVRPPGYDPESAKAAEYKDEKHKGQGSSTQDPVADDNVGSRPEESQGGGERTQERKKPRPKDVFGRALPTEEEFEVLKNAPRMETGIPGRVKPFAVEVRNVKCLRCGNFGHQSGDRDCPLKDAVMPNEELRLKRDDPLTAIIAHTDPSEPLKWELKQKPGLSPPRGGFDPDDPNQQIVAEDIFDEYGGFLEGSIPIEILKSMSSDKKRKSKKNKRHKKHSSRTVEETDESSTGSEDSREKRGSKKRKKLKKKSKKQYDSDSLSFEGSGSDSYRLSRRRHTKHVDPSASLKSEVYHQGNSHREKHYYDEKHQKRKEIVDRPSASSDDSDYYRSNSSRKKRSEDDYKSHHRERKQVHSNDPVSEKSQKQHYSESGKIQRVEKEHRYDERRHRYVDMESENRNRSEKKPRYDDRDSEKHHRSVKGKEKHVYEASDDPEEFSDRYRSTKKTESDSESNRRSRKKKHELSSEEEEGESRKHRYSTNRRRN.

The disordered stretch occupies residues 112–180; the sequence is VRPPGYDPES…KDVFGRALPT (69 aa). Basic and acidic residues-rich tracts occupy residues 120–133 and 161–174; these read ESAK…EKHK and RTQE…KDVF. The CCHC-type; degenerate zinc finger occupies 211–228; that stretch reads VKCLRCGNFGHQSGDRDC. Disordered stretches follow at residues 254–290 and 310–595; these read HTDP…IVAE and KSMS…RRRN. Basic and acidic residues predominate over residues 256-267; sequence DPSEPLKWELKQ. Composition is skewed to basic residues over residues 316 to 331 and 351 to 364; these read KKRK…KHSS and RGSK…KKSK. 3 stretches are compositionally biased toward basic and acidic residues: residues 414–428, 470–539, and 547–565; these read HYYD…EIVD, VSEK…HVYE, and FSDR…ESNR. Over residues 584–595 the composition is skewed to basic residues; sequence RKHRYSTNRRRN.

This is an uncharacterized protein from Arabidopsis thaliana (Mouse-ear cress).